Reading from the N-terminus, the 518-residue chain is Protein nucleotidyltransferase YdiU (518 aa).

Positions 100, 102, 103, 123, 135, 136, 193, and 200 each coordinate ATP. The active-site Proton acceptor is Asp270. Mg(2+)-binding residues include Asn271 and Asp280. An ATP-binding site is contributed by Asp280.

Belongs to the SELO family. The cofactor is Mg(2+). Mn(2+) is required as a cofactor.

The catalysed reaction is L-seryl-[protein] + ATP = 3-O-(5'-adenylyl)-L-seryl-[protein] + diphosphate. The enzyme catalyses L-threonyl-[protein] + ATP = 3-O-(5'-adenylyl)-L-threonyl-[protein] + diphosphate. It carries out the reaction L-tyrosyl-[protein] + ATP = O-(5'-adenylyl)-L-tyrosyl-[protein] + diphosphate. It catalyses the reaction L-histidyl-[protein] + UTP = N(tele)-(5'-uridylyl)-L-histidyl-[protein] + diphosphate. The catalysed reaction is L-seryl-[protein] + UTP = O-(5'-uridylyl)-L-seryl-[protein] + diphosphate. The enzyme catalyses L-tyrosyl-[protein] + UTP = O-(5'-uridylyl)-L-tyrosyl-[protein] + diphosphate. In terms of biological role, nucleotidyltransferase involved in the post-translational modification of proteins. It can catalyze the addition of adenosine monophosphate (AMP) or uridine monophosphate (UMP) to a protein, resulting in modifications known as AMPylation and UMPylation. The sequence is that of Protein nucleotidyltransferase YdiU from Xanthomonas oryzae pv. oryzae (strain MAFF 311018).